Here is a 209-residue protein sequence, read N- to C-terminus: uncharacterized protein (209 aa).

One can recognise a Nudix hydrolase domain in the interval 1–167 (MRNSAGLFMI…LNTYASSNYG (167 aa)).

This is an uncharacterized protein from Orgyia pseudotsugata (Douglas-fir tussock moth).